The sequence spans 97 residues: Large ribosomal subunit protein uL23 (97 aa).

The protein belongs to the universal ribosomal protein uL23 family. Part of the 50S ribosomal subunit. Contacts protein L29, and trigger factor when it is bound to the ribosome.

Functionally, one of the early assembly proteins it binds 23S rRNA. One of the proteins that surrounds the polypeptide exit tunnel on the outside of the ribosome. Forms the main docking site for trigger factor binding to the ribosome. This chain is Large ribosomal subunit protein uL23, found in Rhizobium rhizogenes (strain K84 / ATCC BAA-868) (Agrobacterium radiobacter).